A 186-amino-acid chain; its full sequence is Serine hydrolase RBBP9 (186 aa).

The segment at 63–67 (LHCDE) is involved in binding to RB1. Residues Ser75, Asp138, and His165 each act as charge relay system in the active site.

The protein belongs to the RBBP9 family. In terms of assembly, interacts with RB1; the interaction disrupts RB1 binding to E2F1. Interacts with RBL1 and RBL2. As to expression, expressed at higher levels in tumor tissues such as carcinoma.

The catalysed reaction is valacyclovir + H2O = acyclovir + L-valine + H(+). Inhibited by the natural product emetine produced by the ipecac root. Its function is as follows. Serine hydrolase. Catalyzes the hydrolytic activation of amino acid ester of the antiviral prodrug valacyclovir to its corresponding active drug, acyclovir. May negatively regulate basal or autocrine TGF-beta signaling by suppressing SMAD2-SMAD3 phosphorylation. May play a role in the transformation process due to its capacity to confer resistance to the growth-inhibitory effects of TGF-beta through interaction with RB1 and the subsequent displacement of E2F1. This chain is Serine hydrolase RBBP9, found in Homo sapiens (Human).